A 187-amino-acid chain; its full sequence is Dirigent protein 6 (187 aa).

The N-terminal stretch at 1–29 is a signal peptide; sequence MAFLVEKQLFKALFSFFLLVLLFSDTVLS. Residues cysteine 40 and cysteine 186 are joined by a disulfide bond. N-linked (GlcNAc...) asparagine glycans are attached at residues asparagine 59 and asparagine 123.

It belongs to the plant dirigent protein family. Homodimer. In terms of tissue distribution, expressed in roots, cotyledon veins, leaf trichomes, flowers, siliques, and meristems. Present in interfascicular/vascular cambia and developing xylem.

The protein resides in the secreted. It is found in the extracellular space. The protein localises to the apoplast. Its function is as follows. Dirigent proteins impart stereoselectivity on the phenoxy radical-coupling reaction, yielding optically active lignans from two molecules of coniferyl alcohol in the biosynthesis of lignans, flavonolignans, and alkaloids and thus plays a central role in plant secondary metabolism. Enantiocomplementary dirigent protein that mediates the laccase-catalyzed enantioselective oxidative phenol coupling of (E)-coniferyl alcohol to (-)-pinoresinol. The chain is Dirigent protein 6 (DIR6) from Arabidopsis thaliana (Mouse-ear cress).